The following is a 174-amino-acid chain: Dual-action ribosomal maturation protein DarP (174 aa).

The protein belongs to the DarP family.

It localises to the cytoplasm. Functionally, member of a network of 50S ribosomal subunit biogenesis factors which assembles along the 30S-50S interface, preventing incorrect 23S rRNA structures from forming. Promotes peptidyl transferase center (PTC) maturation. The chain is Dual-action ribosomal maturation protein DarP from Vibrio campbellii (strain ATCC BAA-1116).